The sequence spans 336 residues: NADH-quinone oxidoreductase subunit H (336 aa).

8 helical membrane-spanning segments follow: residues 4–24 (YILW…LVVA), 75–95 (YLFF…WAVI), 108–128 (LGLL…VIAG), 154–174 (MGFA…TGII), 181–201 (IWHW…IAGI), 233–253 (LFFL…SIMF), 272–292 (FVPG…MFLW), and 308–328 (LGWK…ACMV).

The protein belongs to the complex I subunit 1 family. As to quaternary structure, NDH-1 is composed of 14 different subunits. Subunits NuoA, H, J, K, L, M, N constitute the membrane sector of the complex.

Its subcellular location is the cell inner membrane. The catalysed reaction is a quinone + NADH + 5 H(+)(in) = a quinol + NAD(+) + 4 H(+)(out). Functionally, NDH-1 shuttles electrons from NADH, via FMN and iron-sulfur (Fe-S) centers, to quinones in the respiratory chain. The immediate electron acceptor for the enzyme in this species is believed to be ubiquinone. Couples the redox reaction to proton translocation (for every two electrons transferred, four hydrogen ions are translocated across the cytoplasmic membrane), and thus conserves the redox energy in a proton gradient. This subunit may bind ubiquinone. The protein is NADH-quinone oxidoreductase subunit H of Francisella tularensis subsp. mediasiatica (strain FSC147).